A 433-amino-acid chain; its full sequence is Chaperone SurA (433 aa).

Residues 1–24 form the signal peptide; sequence MKYRIKALLLASSLIITTITSVQA. 2 PpiC domains span residues 175–276 and 285–384; these read NVEY…KVLD and VEEV…KLED.

It is found in the periplasm. The enzyme catalyses [protein]-peptidylproline (omega=180) = [protein]-peptidylproline (omega=0). Functionally, chaperone involved in the correct folding and assembly of outer membrane proteins. Recognizes specific patterns of aromatic residues and the orientation of their side chains, which are found more frequently in integral outer membrane proteins. May act in both early periplasmic and late outer membrane-associated steps of protein maturation. This Colwellia psychrerythraea (strain 34H / ATCC BAA-681) (Vibrio psychroerythus) protein is Chaperone SurA.